We begin with the raw amino-acid sequence, 1007 residues long: Beta-galactosidase (1007 aa).

Residues 29 to 48 (TIPPHSDHESFQSQEELEEG) are disordered. The active-site Proton donor is Glu465. Glu532 functions as the Nucleophile in the catalytic mechanism.

It belongs to the glycosyl hydrolase 2 family. Monomer.

It catalyses the reaction Hydrolysis of terminal non-reducing beta-D-galactose residues in beta-D-galactosides.. This chain is Beta-galactosidase (lacZ), found in Lactobacillus delbrueckii subsp. bulgaricus.